We begin with the raw amino-acid sequence, 2635 residues long: Large tegument protein deneddylase (2635 aa).

The tract at residues 1-233 (MAAQPLYMEG…LHGPRMDISR (233 aa)) is deubiquitination activity. A Peptidase C76 domain is found at 9–223 (EGMASTHQAN…NHYRTIVFEE (215 aa)). Catalysis depends on residues C29, D159, and H161. Disordered regions lie at residues 243–497 (ITSP…DRYA), 2238–2269 (PLTITPNKPTGTPHVSPEADPITERKRGQQPK), 2357–2438 (RTAL…KRAA), and 2500–2533 (KAGWDTAPDIPLPHSSPESSPPTSPQPIRVDDKS). Low complexity predominate over residues 245-255 (SPSVSPAPSEA). Basic and acidic residues-rich tracts occupy residues 256-270 (PLRRDSTQSQDETRP) and 282-295 (PTDRPRPPHQDRPP). Residues 316–325 (KTGRGGNEGR) form an interaction with inner tegument protein region. The segment covering 330–346 (PPDEHQPPHITAEHMDQ) has biased composition (basic and acidic residues). The segment covering 448-461 (DDPLTPLYPLTDTP) has biased composition (low complexity). Residues 2379-2402 (TLTFRLPPTAPTPATAALETKTTP) show a composition bias toward low complexity. The segment covering 2425–2437 (HARDTSPPAEKRA) has biased composition (basic and acidic residues).

Belongs to the herpesviridae large tegument protein family. As to quaternary structure, interacts with host CUL1 and CUL4A; these interactions inhibit the E3 ligase activity of cullins. Interacts with inner tegument protein. Interacts with capsid vertex specific component CVC2. Interacts with the major capsid protein/MCP.

The protein resides in the virion tegument. The protein localises to the host cytoplasm. Its subcellular location is the host nucleus. The enzyme catalyses Thiol-dependent hydrolysis of ester, thioester, amide, peptide and isopeptide bonds formed by the C-terminal Gly of ubiquitin (a 76-residue protein attached to proteins as an intracellular targeting signal).. Its function is as follows. Large tegument protein that plays multiple roles in the viral cycle. During viral entry, remains associated with the capsid while most of the tegument is detached and participates in the capsid transport toward the host nucleus. Plays a role in the routing of the capsid at the nuclear pore complex and subsequent uncoating. Within the host nucleus, acts as a deneddylase and promotes the degradation of nuclear CRLs (cullin-RING ubiquitin ligases) and thereby stabilizes nuclear CRL substrates, while cytoplasmic CRLs remain unaffected. These modifications prevent host cell cycle S-phase progression and create a favorable environment allowing efficient viral genome replication. Participates later in the secondary envelopment of capsids. Indeed, plays a linker role for the association of the outer viral tegument to the capsids together with the inner tegument protein. This chain is Large tegument protein deneddylase, found in Homo sapiens (Human).